The chain runs to 420 residues: CinA-like protein (420 aa).

It belongs to the CinA family.

This chain is CinA-like protein, found in Chlorobium phaeobacteroides (strain BS1).